The sequence spans 226 residues: 7-cyano-7-deazaguanine synthase (226 aa).

8–18 (ISGGLDSTTCL) serves as a coordination point for ATP. Cysteine 188, cysteine 198, cysteine 201, and cysteine 204 together coordinate Zn(2+).

It belongs to the QueC family. Zn(2+) serves as cofactor.

The catalysed reaction is 7-carboxy-7-deazaguanine + NH4(+) + ATP = 7-cyano-7-deazaguanine + ADP + phosphate + H2O + H(+). It participates in purine metabolism; 7-cyano-7-deazaguanine biosynthesis. Catalyzes the ATP-dependent conversion of 7-carboxy-7-deazaguanine (CDG) to 7-cyano-7-deazaguanine (preQ(0)). The polypeptide is 7-cyano-7-deazaguanine synthase (Coxiella burnetii (strain Dugway 5J108-111)).